The following is a 268-amino-acid chain: MNQMNPAFVMPDVQSTPDTRQIPIQRVGVKAVRHPLTVRTQGGEVQPTVGTWNLDVHLPADQKGTHMSRFVALLEENKAPLEPATFRTMLAAMLEKLEAEAGRIEVSFPYFVNKTAPVSGVQSLLDYEVTLTGETRNGATRLFLRVRVPVTSLCPCSKKISQYGAHNQRSHVTINAELAGDVAVEELIRIAEEEASCELWGLLKRPDEKFVTERAYENPKFVEDLVRDVAQRLNADERIVAYVLEAENFESIHNHSAYAVIERDKRAG.

It belongs to the GTP cyclohydrolase IV family.

The catalysed reaction is GTP + H2O = 7,8-dihydroneopterin 3'-triphosphate + formate + H(+). It functions in the pathway cofactor biosynthesis; 7,8-dihydroneopterin triphosphate biosynthesis; 7,8-dihydroneopterin triphosphate from GTP: step 1/1. Converts GTP to 7,8-dihydroneopterin triphosphate. The polypeptide is GTP cyclohydrolase FolE2 (Paraburkholderia xenovorans (strain LB400)).